We begin with the raw amino-acid sequence, 102 residues long: MDRQNIRIRLKAFDHRVLDHSTREIVNTAKRTGATVRGPIPLPTRIEKFTVNRSPHIDKKSREQFEIRTHKRVLDIVDPTPQTVDALMKLDLSAGVDVEIKL.

This sequence belongs to the universal ribosomal protein uS10 family. Part of the 30S ribosomal subunit.

Involved in the binding of tRNA to the ribosomes. This is Small ribosomal subunit protein uS10 from Phenylobacterium zucineum (strain HLK1).